Reading from the N-terminus, the 140-residue chain is MAGWNAYIDSLMADGTCQDAAIVGYKDSPSVWAAVPGKTFVSITPAEVGVLVGKDRSSFFVNGLTLGGQKCSVIRDSLLQDGEFTMDLRTKSTGGAPTFNVTVTMTAKTLVLLMGKEGVHGGLINKKCYEMASHLRRSQY.

Position 2 is an N-acetylalanine (Ala-2). The residue at position 28 (Ser-28) is a Phosphoserine. Lys-54 is covalently cross-linked (Glycyl lysine isopeptide (Lys-Gly) (interchain with G-Cter in SUMO2); alternate). A Glycyl lysine isopeptide (Lys-Gly) (interchain with G-Cter in ubiquitin); alternate cross-link involves residue Lys-54. At Ser-57 the chain carries Phosphoserine. Lys-108 bears the N6-acetyllysine mark. A Phosphotyrosine modification is found at Tyr-129. Ser-138 is modified (phosphoserine; by ROCK1).

This sequence belongs to the profilin family. Found in a complex with XPO6, Ran, ACTB and PFN1. Interacts with ACTB. Interacts with VASP. Interacts with HTT. Interacts with SH3BGRL. Occurs in many kinds of cells as a complex with monomeric actin in a 1:1 ratio. Interacts with ACTMAP. Post-translationally, phosphorylation at Ser-138 reduces its affinity for G-actin and blocks its interaction with HTT, reducing its ability to inhibit androgen receptor (AR) and HTT aggregation.

It is found in the cytoplasm. The protein resides in the cytoskeleton. Functionally, binds to actin and affects the structure of the cytoskeleton. At high concentrations, profilin prevents the polymerization of actin, whereas it enhances it at low concentrations. By binding to PIP2, it inhibits the formation of IP3 and DG. Inhibits androgen receptor (AR) and HTT aggregation and binding of G-actin is essential for its inhibition of AR. This chain is Profilin-1 (Pfn1), found in Mus musculus (Mouse).